The chain runs to 331 residues: Probable cyclic nucleotide synthase IK1_05630 (331 aa).

It belongs to the CD-NTase family. D12 subfamily.

In terms of biological role, cyclic nucleotide synthase (second messenger synthase) of a CBASS antivirus system. CBASS (cyclic oligonucleotide-based antiphage signaling system) provides immunity against bacteriophage. The CD-NTase protein synthesizes cyclic nucleotides in response to infection; these serve as specific second messenger signals. The signals activate a diverse range of effectors, leading to bacterial cell death and thus abortive phage infection. A type I-B CBASS system. Its function is as follows. Probably a cyclic nucleotide synthase that makes second messenger nucleotide which activates a CBASS antiviral defense system. Functionally, protects B.subtilis against phage infection. When IK1_05630 and IK1_05631 are introduced in B.subtilis BEST7003 there is 1000-fold protection against phage SBSphiC. Both genes are required for protection. Activation leads to bacterial cell lysis and death, which occurs before the phage has finished its replication cycle, thus protecting non-infected bacteria by aborting the phage infection and preventing its propagation. The polypeptide is Probable cyclic nucleotide synthase IK1_05630 (Bacillus cereus (strain VD146)).